Consider the following 224-residue polypeptide: MTEKRAVILLSGGLDSATVVAMAKAEGYSCYTMSFDYGQRHRAELNAAARVARDLGVVEHKVIGLNLDGIGGSALTDSSIDVPETPGEGIPVTYVPARNTVFLSLALGWAEVLQARDIFIGVNAVDYSGYPDCRPEFVEAFERMANLATKAGVEGQGFRIQAPLQNMSKAQIVQAGMARGVDYSLTVSCYQADDEGRACGKCDSCRLRADGFKAAGVEDPTRYF.

Residue 10–20 (LSGGLDSATVV) participates in ATP binding. Zn(2+) contacts are provided by C189, C199, C202, and C205.

The protein belongs to the QueC family. Requires Zn(2+) as cofactor.

The catalysed reaction is 7-carboxy-7-deazaguanine + NH4(+) + ATP = 7-cyano-7-deazaguanine + ADP + phosphate + H2O + H(+). It functions in the pathway purine metabolism; 7-cyano-7-deazaguanine biosynthesis. Its function is as follows. Catalyzes the ATP-dependent conversion of 7-carboxy-7-deazaguanine (CDG) to 7-cyano-7-deazaguanine (preQ(0)). In Pseudomonas putida (strain W619), this protein is 7-cyano-7-deazaguanine synthase.